We begin with the raw amino-acid sequence, 161 residues long: Nucleotide-binding protein lpl1175 (161 aa).

Belongs to the YajQ family.

Functionally, nucleotide-binding protein. The sequence is that of Nucleotide-binding protein lpl1175 from Legionella pneumophila (strain Lens).